The primary structure comprises 43 residues: Protein PsbN (43 aa).

A helical membrane pass occupies residues 4–24 (ATFVAIFISCLLISFTGYALY).

This sequence belongs to the PsbN family.

It is found in the plastid. Its subcellular location is the chloroplast thylakoid membrane. Its function is as follows. May play a role in photosystem I and II biogenesis. The chain is Protein PsbN from Marchantia polymorpha (Common liverwort).